The following is a 547-amino-acid chain: Transmembrane protein 145 (547 aa).

A helical transmembrane segment spans residues 2 to 22; sequence GPHAGPGMLLLLLGFLRISAA. N-linked (GlcNAc...) asparagine glycosylation is found at Asn-28 and Asn-102. 2 helical membrane-spanning segments follow: residues 182–202 and 214–234; these read ITFL…GYIL and MFMA…VYWG. N-linked (GlcNAc...) asparagine glycosylation is present at Asn-243. A run of 5 helical transmembrane segments spans residues 248–268, 283–303, 325–345, 356–376, and 388–408; these read VLAK…LILL, GSIK…VLFI, GNIA…LVTL, VPFF…ALIA, and IVNG…LIIT. 3 N-linked (GlcNAc...) asparagine glycosylation sites follow: Asn-443, Asn-453, and Asn-464.

Its subcellular location is the membrane. This Xenopus laevis (African clawed frog) protein is Transmembrane protein 145 (tmem145).